The following is a 289-amino-acid chain: Ribosomal protein L11 methyltransferase (289 aa).

S-adenosyl-L-methionine contacts are provided by threonine 134, glycine 155, aspartate 177, and asparagine 225.

Belongs to the methyltransferase superfamily. PrmA family.

It localises to the cytoplasm. It catalyses the reaction L-lysyl-[protein] + 3 S-adenosyl-L-methionine = N(6),N(6),N(6)-trimethyl-L-lysyl-[protein] + 3 S-adenosyl-L-homocysteine + 3 H(+). In terms of biological role, methylates ribosomal protein L11. The chain is Ribosomal protein L11 methyltransferase from Parasynechococcus marenigrum (strain WH8102).